The sequence spans 351 residues: Succinylglutamate desuccinylase (351 aa).

Residues His-73, Glu-76, and His-168 each contribute to the Zn(2+) site. Glu-231 is an active-site residue.

It belongs to the AspA/AstE family. Succinylglutamate desuccinylase subfamily. Zn(2+) serves as cofactor.

The enzyme catalyses N-succinyl-L-glutamate + H2O = L-glutamate + succinate. It functions in the pathway amino-acid degradation; L-arginine degradation via AST pathway; L-glutamate and succinate from L-arginine: step 5/5. Functionally, transforms N(2)-succinylglutamate into succinate and glutamate. The protein is Succinylglutamate desuccinylase of Burkholderia lata (strain ATCC 17760 / DSM 23089 / LMG 22485 / NCIMB 9086 / R18194 / 383).